A 502-amino-acid polypeptide reads, in one-letter code: Mannitol 2-dehydrogenase (502 aa).

Residue 35–46 (IVHVGVGGFHRA) participates in NAD(+) binding.

This sequence belongs to the mannitol dehydrogenase family. Monomer.

The enzyme catalyses D-mannitol + NAD(+) = D-fructose + NADH + H(+). Its function is as follows. Catalyzes the NAD(H)-dependent interconversion of D-fructose and D-mannitol in the mannitol metabolic pathway. The sequence is that of Mannitol 2-dehydrogenase from Pyricularia oryzae (strain 70-15 / ATCC MYA-4617 / FGSC 8958) (Rice blast fungus).